The sequence spans 123 residues: MIQTQTMLDVADNSGARRVQCIKVLGGSHRRYARVGDVIKVTVKEAIPRGKVKKGQVLKAVVVRTKSGVRRTDGSLIRFDGNAAVLLHNANEQPIGTRIFGPVTRELRNEKFMKIISLAPEVL.

It belongs to the universal ribosomal protein uL14 family. In terms of assembly, part of the 50S ribosomal subunit. Forms a cluster with proteins L3 and L19. In the 70S ribosome, L14 and L19 interact and together make contacts with the 16S rRNA in bridges B5 and B8.

Its function is as follows. Binds to 23S rRNA. Forms part of two intersubunit bridges in the 70S ribosome. This is Large ribosomal subunit protein uL14 from Chromohalobacter salexigens (strain ATCC BAA-138 / DSM 3043 / CIP 106854 / NCIMB 13768 / 1H11).